The sequence spans 347 residues: Selenide, water dikinase (347 aa).

Cysteine 17 is an active-site residue. Residues lysine 20 and threonine 48–aspartate 50 each bind ATP. Aspartate 51 serves as a coordination point for Mg(2+). ATP is bound by residues aspartate 68, aspartate 91, and glycine 139–serine 141. Residue aspartate 91 participates in Mg(2+) binding. Aspartate 227 is a Mg(2+) binding site.

It belongs to the selenophosphate synthase 1 family. Class I subfamily. In terms of assembly, homodimer. Mg(2+) is required as a cofactor.

The enzyme catalyses hydrogenselenide + ATP + H2O = selenophosphate + AMP + phosphate + 2 H(+). Functionally, synthesizes selenophosphate from selenide and ATP. The chain is Selenide, water dikinase from Cronobacter sakazakii (strain ATCC BAA-894) (Enterobacter sakazakii).